The primary structure comprises 480 residues: MSALAQNETIAHQIKQQGGVEAYLHAQQEKGLLRFLTCGSVDDGKSTLIGRLLHDTRQIYEDQLSTLQNDSKRIGTQGEKLDLALLVDGLAAEREQGITIDVAYRYFSTEKRKFIIADTPGHEQYTRNMATGASTCDLSILLIDARKGVQEQTRRHSFISTLLGIRHLVVAVNKMDLMEYRQEVFNQIKQDYMNFAGQLPTNLDVHFVPISALDGDNIVTISRNMDWYEGPTLLDILETVDVKKEASKQLLRFPVQYVSRPDLDFRGYSGTLSSGILRKGQKVKVMPSGICSQVERIVTFDGDLDFAVPGEAITVVLKDEIDISRGDLLISADDEMMVTRHALVDVVWMSEQPLVQGQNLDIKVAGKKSRGKVENIQYQVDITHLTQRVAVDLPLNAIGSVEFSFEEPLMLDSYQQNSDTGGIILVDRLTNVTVGAGLVREIQTDVYEGPKEFSEFELELNRLIRRHFPHWGARDLLGGK.

Residues K30 to K248 enclose the tr-type G domain. Positions G39 to S46 are G1. Residue G39–S46 participates in GTP binding. The segment at G97 to D101 is G2. The interval D118–G121 is G3. GTP-binding positions include D118–H122 and N173–D176. The tract at residues N173–D176 is G4. The tract at residues S211–L213 is G5.

This sequence belongs to the TRAFAC class translation factor GTPase superfamily. Classic translation factor GTPase family. CysN/NodQ subfamily. As to quaternary structure, heterodimer composed of CysD, the smaller subunit, and CysN.

The catalysed reaction is sulfate + ATP + H(+) = adenosine 5'-phosphosulfate + diphosphate. Its pathway is sulfur metabolism; hydrogen sulfide biosynthesis; sulfite from sulfate: step 1/3. With CysD forms the ATP sulfurylase (ATPS) that catalyzes the adenylation of sulfate producing adenosine 5'-phosphosulfate (APS) and diphosphate, the first enzymatic step in sulfur assimilation pathway. APS synthesis involves the formation of a high-energy phosphoric-sulfuric acid anhydride bond driven by GTP hydrolysis by CysN coupled to ATP hydrolysis by CysD. The chain is Sulfate adenylyltransferase subunit 1 from Photorhabdus laumondii subsp. laumondii (strain DSM 15139 / CIP 105565 / TT01) (Photorhabdus luminescens subsp. laumondii).